Here is a 206-residue protein sequence, read N- to C-terminus: Ribosomal RNA large subunit methyltransferase E (206 aa).

5 residues coordinate S-adenosyl-L-methionine: Gly60, Trp62, Asp80, Asp96, and Asp121. Lys161 (proton acceptor) is an active-site residue.

Belongs to the class I-like SAM-binding methyltransferase superfamily. RNA methyltransferase RlmE family.

Its subcellular location is the cytoplasm. It carries out the reaction uridine(2552) in 23S rRNA + S-adenosyl-L-methionine = 2'-O-methyluridine(2552) in 23S rRNA + S-adenosyl-L-homocysteine + H(+). Its function is as follows. Specifically methylates the uridine in position 2552 of 23S rRNA at the 2'-O position of the ribose in the fully assembled 50S ribosomal subunit. The protein is Ribosomal RNA large subunit methyltransferase E of Stutzerimonas stutzeri (strain A1501) (Pseudomonas stutzeri).